Here is a 234-residue protein sequence, read N- to C-terminus: NAD-dependent protein deacylase (234 aa).

The region spanning 1-234 (MKNLVVLTGA…ELKQLLIPAP (234 aa)) is the Deacetylase sirtuin-type domain. Position 9 to 28 (9 to 28 (GAGMSAESGISTFRDAGGLW)) interacts with NAD(+). Tyr-53 and Arg-56 together coordinate substrate. Residue 86-89 (QNVD) coordinates NAD(+). His-104 serves as the catalytic Proton acceptor. An NAD(+)-binding site is contributed by 175 to 177 (GTS).

It belongs to the sirtuin family. Class III subfamily.

The protein localises to the cytoplasm. It catalyses the reaction N(6)-acetyl-L-lysyl-[protein] + NAD(+) + H2O = 2''-O-acetyl-ADP-D-ribose + nicotinamide + L-lysyl-[protein]. The enzyme catalyses N(6)-succinyl-L-lysyl-[protein] + NAD(+) + H2O = 2''-O-succinyl-ADP-D-ribose + nicotinamide + L-lysyl-[protein]. NAD-dependent lysine deacetylase and desuccinylase that specifically removes acetyl and succinyl groups on target proteins. Modulates the activities of several proteins which are inactive in their acylated form. This Bacteroides thetaiotaomicron (strain ATCC 29148 / DSM 2079 / JCM 5827 / CCUG 10774 / NCTC 10582 / VPI-5482 / E50) protein is NAD-dependent protein deacylase.